The following is a 359-amino-acid chain: Histidinol-phosphate aminotransferase (359 aa).

Lys-217 carries the post-translational modification N6-(pyridoxal phosphate)lysine.

It belongs to the class-II pyridoxal-phosphate-dependent aminotransferase family. Histidinol-phosphate aminotransferase subfamily. Homodimer. Pyridoxal 5'-phosphate is required as a cofactor.

It catalyses the reaction L-histidinol phosphate + 2-oxoglutarate = 3-(imidazol-4-yl)-2-oxopropyl phosphate + L-glutamate. It participates in amino-acid biosynthesis; L-histidine biosynthesis; L-histidine from 5-phospho-alpha-D-ribose 1-diphosphate: step 7/9. In Roseobacter denitrificans (strain ATCC 33942 / OCh 114) (Erythrobacter sp. (strain OCh 114)), this protein is Histidinol-phosphate aminotransferase.